Consider the following 312-residue polypeptide: Cytochrome c biogenesis protein CcsA (312 aa).

8 helical membrane passes run 12–32 (NLVFGILLFAMTIYWISLSFF), 47–67 (IVANILLFFILGSRWIVAGYF), 72–92 (LYESLLFLTWTLLTIYLYVEF), 98–118 (LVGAILIPVALLINGFANLTL), 144–164 (MMLSYGTLIMGSLLCILFLVI), 220–240 (IIGLGFPFLTIGIIAGGVWAN), 254–271 (TWALITWIVFATYLHSRI), and 281–301 (AILGGLGFFVIWICYLGVNFL).

Belongs to the CcmF/CycK/Ccl1/NrfE/CcsA family. As to quaternary structure, may interact with Ccs1.

The protein resides in the plastid. Its subcellular location is the chloroplast thylakoid membrane. Its function is as follows. Required during biogenesis of c-type cytochromes (cytochrome c6 and cytochrome f) at the step of heme attachment. This Trieres chinensis (Marine centric diatom) protein is Cytochrome c biogenesis protein CcsA.